We begin with the raw amino-acid sequence, 129 residues long: uncharacterized protein (129 aa).

Residues 77–97 (ILAVFIISFIIVVVGVLLLGL) form a helical membrane-spanning segment. Residues 109–129 (SSNDKKLQSNDEEKQALAEKA) are disordered. The segment covering 111-129 (NDKKLQSNDEEKQALAEKA) has biased composition (basic and acidic residues).

It localises to the vacuole membrane. This is an uncharacterized protein from Saccharomyces cerevisiae (strain ATCC 204508 / S288c) (Baker's yeast).